A 118-amino-acid polypeptide reads, in one-letter code: Large ribosomal subunit protein bL19 (118 aa).

This sequence belongs to the bacterial ribosomal protein bL19 family.

This protein is located at the 30S-50S ribosomal subunit interface and may play a role in the structure and function of the aminoacyl-tRNA binding site. The sequence is that of Large ribosomal subunit protein bL19 from Metamycoplasma arthritidis (strain 158L3-1) (Mycoplasma arthritidis).